A 436-amino-acid chain; its full sequence is Gamma-glutamyl phosphate reductase (436 aa).

This sequence belongs to the gamma-glutamyl phosphate reductase family.

Its subcellular location is the cytoplasm. The catalysed reaction is L-glutamate 5-semialdehyde + phosphate + NADP(+) = L-glutamyl 5-phosphate + NADPH + H(+). The protein operates within amino-acid biosynthesis; L-proline biosynthesis; L-glutamate 5-semialdehyde from L-glutamate: step 2/2. In terms of biological role, catalyzes the NADPH-dependent reduction of L-glutamate 5-phosphate into L-glutamate 5-semialdehyde and phosphate. The product spontaneously undergoes cyclization to form 1-pyrroline-5-carboxylate. The chain is Gamma-glutamyl phosphate reductase from Prochlorococcus marinus (strain SARG / CCMP1375 / SS120).